An 89-amino-acid polypeptide reads, in one-letter code: Small ribosomal subunit protein bS16 (89 aa).

It belongs to the bacterial ribosomal protein bS16 family.

In Psychrobacter arcticus (strain DSM 17307 / VKM B-2377 / 273-4), this protein is Small ribosomal subunit protein bS16.